The following is a 396-amino-acid chain: Probable sugar efflux transporter (396 aa).

Residues 1–14 (MTINPVSRKVAWLR) are Cytoplasmic-facing. Residues 15-35 (VVTLAIAAFIFNTTEFVPVGL) form a helical membrane-spanning segment. The Periplasmic portion of the chain corresponds to 36–49 (LSDIAESFHMQTAQ). Residues 50–70 (VGIMLTIYAWVVAVMSLPFML) form a helical membrane-spanning segment. The Cytoplasmic portion of the chain corresponds to 71 to 80 (LTSQMERRKL). The helical transmembrane segment at 81 to 101 (LIYLFVLFIASHVLSFLAWNF) threads the bilayer. Residue threonine 102 is a topological domain, periplasmic. The chain crosses the membrane as a helical span at residues 103–123 (VLVISRIGIAFAHAIFWSITA). Residues 124–135 (SLAIRLAPAGKR) lie on the Cytoplasmic side of the membrane. A helical transmembrane segment spans residues 136–156 (AQALSLIATGTALAMVLGLPI). Residues 157–168 (GRVVGQYFGWRT) are Periplasmic-facing. Residues 169-189 (TFFAIGMGALITLLCLIKLLP) form a helical membrane-spanning segment. Over 190–208 (KLPSEHSGSLKSLPLLFRR) the chain is Cytoplasmic. Residues 209-229 (PALMSLYVLTVVVVTAHYTAY) form a helical membrane-spanning segment. The Periplasmic segment spans residues 230–245 (SYIEPFVQNVAGLSAN). The helical transmembrane segment at 246 to 266 (FATVLLLILGGAGIIGSLVFG) threads the bilayer. The Cytoplasmic segment spans residues 267–274 (KLGNRHAS). A helical membrane pass occupies residues 275–295 (SLVSIAIALLVVCLLLLLPAA). Topologically, residues 296 to 300 (ESEAH) are periplasmic. Residues 301–321 (LAILSIFWGIAIMVIGLGMQV) form a helical membrane-spanning segment. The Cytoplasmic portion of the chain corresponds to 322-332 (KVLALAPDATD). Residues 333–353 (VAMALFSGIFNIGIGAGALVG) traverse the membrane as a helical segment. The Periplasmic segment spans residues 354-363 (NQVSLHWSMS). Residues 364–384 (AIGYIGAIPACAALVWAVLIF) traverse the membrane as a helical segment. The Cytoplasmic portion of the chain corresponds to 385 to 396 (RKWPVTLEEQPH).

Belongs to the major facilitator superfamily. SotB (TC 2.A.1.2) family.

The protein resides in the cell inner membrane. Involved in the efflux of sugars. The physiological role may be the reduction of the intracellular concentration of toxic sugars or sugar metabolites. In Salmonella typhimurium (strain LT2 / SGSC1412 / ATCC 700720), this protein is Probable sugar efflux transporter.